The primary structure comprises 130 residues: Small ribosomal subunit protein uS8 (130 aa).

Belongs to the universal ribosomal protein uS8 family. Part of the 30S ribosomal subunit.

Functionally, one of the primary rRNA binding proteins, it binds directly to 16S rRNA central domain where it helps coordinate assembly of the platform of the 30S subunit. This chain is Small ribosomal subunit protein uS8, found in Methanococcoides burtonii (strain DSM 6242 / NBRC 107633 / OCM 468 / ACE-M).